The sequence spans 223 residues: Adenylate kinase (223 aa).

Position 10-15 (10-15 (GSGKGT)) interacts with ATP. Residues 30-59 (ESGAIFRKHIGGGTELGMKAKEYIDKGELV) are NMP. AMP-binding positions include S31, R36, 57–59 (ELV), 84–87 (GFPR), and Q91. An LID region spans residues 125-164 (GRRLCENDPNHPNNKFIDAIKPDGDKCRVCGGALSERADD). Position 126 (R126) interacts with ATP. 2 residues coordinate AMP: R161 and R173. G209 contributes to the ATP binding site.

It belongs to the adenylate kinase family. As to quaternary structure, monomer.

The protein localises to the cytoplasm. It catalyses the reaction AMP + ATP = 2 ADP. The protein operates within purine metabolism; AMP biosynthesis via salvage pathway; AMP from ADP: step 1/1. Catalyzes the reversible transfer of the terminal phosphate group between ATP and AMP. Plays an important role in cellular energy homeostasis and in adenine nucleotide metabolism. This chain is Adenylate kinase, found in Maridesulfovibrio salexigens (strain ATCC 14822 / DSM 2638 / NCIMB 8403 / VKM B-1763) (Desulfovibrio salexigens).